The following is a 132-amino-acid chain: S-protein homolog 19 (132 aa).

The first 26 residues, 1-26, serve as a signal peptide directing secretion; it reads MSGSLAFHIIMSVTFMVFFFGGLCEA. Residue asparagine 87 is glycosylated (N-linked (GlcNAc...) asparagine).

It belongs to the plant self-incompatibility (S1) protein family.

The protein resides in the secreted. The protein is S-protein homolog 19 of Arabidopsis thaliana (Mouse-ear cress).